The primary structure comprises 374 residues: UDP-N-acetylglucosamine--N-acetylmuramyl-(pentapeptide) pyrophosphoryl-undecaprenol N-acetylglucosamine transferase (374 aa).

Residues 13-15 (TGG), Asn124, Arg165, Ser193, and Gln294 contribute to the UDP-N-acetyl-alpha-D-glucosamine site.

Belongs to the glycosyltransferase 28 family. MurG subfamily.

It is found in the cell inner membrane. It carries out the reaction di-trans,octa-cis-undecaprenyl diphospho-N-acetyl-alpha-D-muramoyl-L-alanyl-D-glutamyl-meso-2,6-diaminopimeloyl-D-alanyl-D-alanine + UDP-N-acetyl-alpha-D-glucosamine = di-trans,octa-cis-undecaprenyl diphospho-[N-acetyl-alpha-D-glucosaminyl-(1-&gt;4)]-N-acetyl-alpha-D-muramoyl-L-alanyl-D-glutamyl-meso-2,6-diaminopimeloyl-D-alanyl-D-alanine + UDP + H(+). The protein operates within cell wall biogenesis; peptidoglycan biosynthesis. In terms of biological role, cell wall formation. Catalyzes the transfer of a GlcNAc subunit on undecaprenyl-pyrophosphoryl-MurNAc-pentapeptide (lipid intermediate I) to form undecaprenyl-pyrophosphoryl-MurNAc-(pentapeptide)GlcNAc (lipid intermediate II). The protein is UDP-N-acetylglucosamine--N-acetylmuramyl-(pentapeptide) pyrophosphoryl-undecaprenol N-acetylglucosamine transferase of Rhizobium etli (strain ATCC 51251 / DSM 11541 / JCM 21823 / NBRC 15573 / CFN 42).